A 111-amino-acid polypeptide reads, in one-letter code: Mitochondrial import inner membrane translocase subunit TIM14 (111 aa).

Residues 1 to 3 (MTG) are Mitochondrial intermembrane-facing. The chain crosses the membrane as a helical span at residues 4–24 (GLIAAGLGLAAVGFGARYVLR). Residues 25–111 (NQALIKKGME…AKDLMESTKS (87 aa)) are Mitochondrial matrix-facing. Positions 58–111 (EAAKILGITPSAKPAKIKDAHKKVMIVNHPDRGGSPYLAAKINEAKDLMESTKS) constitute a J domain.

This sequence belongs to the TIM14 family. Probable component of the PAM complex at least composed of a mitochondrial HSP70 protein, GrpE, tim-44, tim-16 and tim-14.

The protein localises to the mitochondrion inner membrane. Its function is as follows. Probable component of the PAM complex, a complex required for the translocation of transit peptide-containing proteins from the inner membrane into the mitochondrial matrix in an ATP-dependent manner. May act as a co-chaperone that stimulate the ATP-dependent activity. This is Mitochondrial import inner membrane translocase subunit TIM14 (dnj-21) from Caenorhabditis briggsae.